The sequence spans 514 residues: Anthranilate synthase component 1 (514 aa).

Residues T40 and 290-292 contribute to the L-tryptophan site; that span reads PYM. Position 327–328 (327–328) interacts with chorismate; it reads GT. E360 contacts Mg(2+). Chorismate is bound by residues Y448, R468, 482-484, and G484; that span reads GAG. E497 lines the Mg(2+) pocket.

The protein belongs to the anthranilate synthase component I family. As to quaternary structure, heterotetramer consisting of two non-identical subunits: a beta subunit (TrpG) and a large alpha subunit (TrpE). The cofactor is Mg(2+).

The enzyme catalyses chorismate + L-glutamine = anthranilate + pyruvate + L-glutamate + H(+). The protein operates within amino-acid biosynthesis; L-tryptophan biosynthesis; L-tryptophan from chorismate: step 1/5. With respect to regulation, feedback inhibited by tryptophan. In terms of biological role, part of a heterotetrameric complex that catalyzes the two-step biosynthesis of anthranilate, an intermediate in the biosynthesis of L-tryptophan. In the first step, the glutamine-binding beta subunit (TrpG) of anthranilate synthase (AS) provides the glutamine amidotransferase activity which generates ammonia as a substrate that, along with chorismate, is used in the second step, catalyzed by the large alpha subunit of AS (TrpE) to produce anthranilate. In the absence of TrpG, TrpE can synthesize anthranilate directly from chorismate and high concentrations of ammonia. In Buchnera aphidicola subsp. Rhopalosiphum padi, this protein is Anthranilate synthase component 1 (trpE).